We begin with the raw amino-acid sequence, 94 residues long: Large ribosomal subunit protein uL23 (94 aa).

It belongs to the universal ribosomal protein uL23 family. In terms of assembly, part of the 50S ribosomal subunit. Contacts protein L29, and trigger factor when it is bound to the ribosome.

One of the early assembly proteins it binds 23S rRNA. One of the proteins that surrounds the polypeptide exit tunnel on the outside of the ribosome. Forms the main docking site for trigger factor binding to the ribosome. The polypeptide is Large ribosomal subunit protein uL23 (Symbiobacterium thermophilum (strain DSM 24528 / JCM 14929 / IAM 14863 / T)).